A 282-amino-acid polypeptide reads, in one-letter code: Bis(5'-nucleosyl)-tetraphosphatase, symmetrical (282 aa).

Belongs to the Ap4A hydrolase family.

The enzyme catalyses P(1),P(4)-bis(5'-adenosyl) tetraphosphate + H2O = 2 ADP + 2 H(+). In terms of biological role, hydrolyzes diadenosine 5',5'''-P1,P4-tetraphosphate to yield ADP. The sequence is that of Bis(5'-nucleosyl)-tetraphosphatase, symmetrical from Burkholderia thailandensis (strain ATCC 700388 / DSM 13276 / CCUG 48851 / CIP 106301 / E264).